A 413-amino-acid polypeptide reads, in one-letter code: MSTLQSKDPKVFEAVQQELGRQRDKIELIASENFVSEAVMEAQSSVLTNKYAEGYPGRRYYGGCEYVDIVEDLARDRAKEIFGGEHVNVQPHSGAQANMAVYFTILEHGDTVLGMNLSHGGHLTHGSPVNFSGIQYNFVEYGVDKESQRIDYEEVRRLAKEHQPKMIVAGASAYPREIDFAKFREIADEVGAYLMVDMAHIAGLVAAGLHQNPVPHSHFVTTTTHKTLRGPRGGMIICNEEFAKQIDKSIFPGIQGGPLMHVIAAKAVAFGEALQPEFKSYGEAIIRNAKRLGEKLTSEGIDLVSGGTDNHLLLLDLRSLGLTGKVAEKALDDVGITTNKNTIPFDPESPFVTSGIRIGTAAVTSRGLDEEAMDEIGATIALTLKNVDNEEKMNEARERVDALTAKFPMYPNL.

Residues Leu117 and 121–123 (GHL) each bind (6S)-5,6,7,8-tetrahydrofolate. Lys226 is subject to N6-(pyridoxal phosphate)lysine. (6S)-5,6,7,8-tetrahydrofolate is bound by residues Glu241 and 349 to 351 (SPF).

Belongs to the SHMT family. As to quaternary structure, homodimer. Pyridoxal 5'-phosphate is required as a cofactor.

It is found in the cytoplasm. It catalyses the reaction (6R)-5,10-methylene-5,6,7,8-tetrahydrofolate + glycine + H2O = (6S)-5,6,7,8-tetrahydrofolate + L-serine. The protein operates within one-carbon metabolism; tetrahydrofolate interconversion. It participates in amino-acid biosynthesis; glycine biosynthesis; glycine from L-serine: step 1/1. Functionally, catalyzes the reversible interconversion of serine and glycine with tetrahydrofolate (THF) serving as the one-carbon carrier. This reaction serves as the major source of one-carbon groups required for the biosynthesis of purines, thymidylate, methionine, and other important biomolecules. Also exhibits THF-independent aldolase activity toward beta-hydroxyamino acids, producing glycine and aldehydes, via a retro-aldol mechanism. The polypeptide is Serine hydroxymethyltransferase (Halalkalibacterium halodurans (strain ATCC BAA-125 / DSM 18197 / FERM 7344 / JCM 9153 / C-125) (Bacillus halodurans)).